Here is a 378-residue protein sequence, read N- to C-terminus: UDP-N-acetylglucosamine--N-acetylmuramyl-(pentapeptide) pyrophosphoryl-undecaprenol N-acetylglucosamine transferase (378 aa).

UDP-N-acetyl-alpha-D-glucosamine is bound by residues 24–26, N144, R181, S215, and Q310; that span reads TAG.

The protein belongs to the glycosyltransferase 28 family. MurG subfamily.

The protein localises to the cell membrane. The enzyme catalyses di-trans,octa-cis-undecaprenyl diphospho-N-acetyl-alpha-D-muramoyl-L-alanyl-D-glutamyl-meso-2,6-diaminopimeloyl-D-alanyl-D-alanine + UDP-N-acetyl-alpha-D-glucosamine = di-trans,octa-cis-undecaprenyl diphospho-[N-acetyl-alpha-D-glucosaminyl-(1-&gt;4)]-N-acetyl-alpha-D-muramoyl-L-alanyl-D-glutamyl-meso-2,6-diaminopimeloyl-D-alanyl-D-alanine + UDP + H(+). It functions in the pathway cell wall biogenesis; peptidoglycan biosynthesis. Cell wall formation. Catalyzes the transfer of a GlcNAc subunit on undecaprenyl-pyrophosphoryl-MurNAc-pentapeptide (lipid intermediate I) to form undecaprenyl-pyrophosphoryl-MurNAc-(pentapeptide)GlcNAc (lipid intermediate II). The sequence is that of UDP-N-acetylglucosamine--N-acetylmuramyl-(pentapeptide) pyrophosphoryl-undecaprenol N-acetylglucosamine transferase from Nocardia farcinica (strain IFM 10152).